A 129-amino-acid polypeptide reads, in one-letter code: Bacteriohemerythrin (129 aa).

Fe cation contacts are provided by His19, His59, Glu63, His78, His82, His119, and Asp124.

Belongs to the hemerythrin family. Monomer.

Functionally, oxygen-binding protein. May be involved in a storage mechanism or for delivery to oxygen-requiring enzymes. The oxygen-binding site contains two iron atoms. The polypeptide is Bacteriohemerythrin (Clostridium acetobutylicum (strain ATCC 824 / DSM 792 / JCM 1419 / IAM 19013 / LMG 5710 / NBRC 13948 / NRRL B-527 / VKM B-1787 / 2291 / W)).